A 288-amino-acid polypeptide reads, in one-letter code: 4-diphosphocytidyl-2-C-methyl-D-erythritol kinase (288 aa).

Residue K13 is part of the active site. Residue 96–106 (PMGGGIGGGSS) coordinates ATP. Residue D138 is part of the active site.

This sequence belongs to the GHMP kinase family. IspE subfamily.

It catalyses the reaction 4-CDP-2-C-methyl-D-erythritol + ATP = 4-CDP-2-C-methyl-D-erythritol 2-phosphate + ADP + H(+). It functions in the pathway isoprenoid biosynthesis; isopentenyl diphosphate biosynthesis via DXP pathway; isopentenyl diphosphate from 1-deoxy-D-xylulose 5-phosphate: step 3/6. Its function is as follows. Catalyzes the phosphorylation of the position 2 hydroxy group of 4-diphosphocytidyl-2C-methyl-D-erythritol. This chain is 4-diphosphocytidyl-2-C-methyl-D-erythritol kinase, found in Aliivibrio fischeri (strain ATCC 700601 / ES114) (Vibrio fischeri).